The following is a 147-amino-acid chain: SsrA-binding protein (147 aa).

It belongs to the SmpB family.

It is found in the cytoplasm. In terms of biological role, required for rescue of stalled ribosomes mediated by trans-translation. Binds to transfer-messenger RNA (tmRNA), required for stable association of tmRNA with ribosomes. tmRNA and SmpB together mimic tRNA shape, replacing the anticodon stem-loop with SmpB. tmRNA is encoded by the ssrA gene; the 2 termini fold to resemble tRNA(Ala) and it encodes a 'tag peptide', a short internal open reading frame. During trans-translation Ala-aminoacylated tmRNA acts like a tRNA, entering the A-site of stalled ribosomes, displacing the stalled mRNA. The ribosome then switches to translate the ORF on the tmRNA; the nascent peptide is terminated with the 'tag peptide' encoded by the tmRNA and targeted for degradation. The ribosome is freed to recommence translation, which seems to be the essential function of trans-translation. The protein is SsrA-binding protein of Mycoplasmopsis fermentans (strain ATCC 19989 / NBRC 14854 / NCTC 10117 / PG18) (Mycoplasma fermentans).